A 397-amino-acid polypeptide reads, in one-letter code: Elongation factor Tu (397 aa).

The tr-type G domain occupies 10–207; sequence KPHVNVGTIG…TLDTYIPEPV (198 aa). A G1 region spans residues 19–26; the sequence is GHVDHGKT. Position 19–26 (19–26) interacts with GTP; that stretch reads GHVDHGKT. Threonine 26 provides a ligand contact to Mg(2+). The G2 stretch occupies residues 60–64; the sequence is GITIN. A G3 region spans residues 81–84; that stretch reads DCPG. GTP contacts are provided by residues 81-85 and 136-139; these read DCPGH and NKAD. Residues 136–139 form a G4 region; that stretch reads NKAD. Residues 174 to 176 form a G5 region; that stretch reads SAL.

It belongs to the TRAFAC class translation factor GTPase superfamily. Classic translation factor GTPase family. EF-Tu/EF-1A subfamily. As to quaternary structure, monomer.

It localises to the cytoplasm. The enzyme catalyses GTP + H2O = GDP + phosphate + H(+). In terms of biological role, GTP hydrolase that promotes the GTP-dependent binding of aminoacyl-tRNA to the A-site of ribosomes during protein biosynthesis. The polypeptide is Elongation factor Tu (Ectopseudomonas mendocina (strain ymp) (Pseudomonas mendocina)).